Consider the following 83-residue polypeptide: MSSGGLLLLLGLLTLWAELTPVSSKDRPKFCELPADSGPCRGILRAFYYHPVHRTCQMFIYGGCYGNANNFKTIDECKRTCAA.

The first 24 residues, 1 to 24, serve as a signal peptide directing secretion; sequence MSSGGLLLLLGLLTLWAELTPVSS. In terms of domain architecture, BPTI/Kunitz inhibitor spans 31-81; it reads CELPADSGPCRGILRAFYYHPVHRTCQMFIYGGCYGNANNFKTIDECKRTC. 3 cysteine pairs are disulfide-bonded: C31–C81, C40–C64, and C56–C77.

The protein localises to the secreted. Serine protease inhibitor. In Notechis scutatus scutatus (Mainland tiger snake), this protein is Tigerin-4.